The chain runs to 2138 residues: Conidial yellow pigment biosynthesis polyketide synthase melA (2138 aa).

The N-terminal acylcarrier protein transacylase domain (SAT) stretch occupies residues 8–244 (YLFGDQTADF…TRVPIHGPYH (237 aa)). The Ketosynthase family 3 (KS3) domain occupies 373–804 (QSKIAIIGLS…GGNTALMVED (432 aa)). Residues Cys-545, His-680, and His-722 each act as for beta-ketoacyl synthase activity in the active site. Positions 910 to 1229 (FVFTGQGAQY…VSALYMAGIE (320 aa)) are malonyl-CoA:ACP transacylase (MAT) domain. The active-site For acyl/malonyl transferase activity is the Ser-999. Residues 1288–1601 (SSAAQRVLET…RKILDMALPP (314 aa)) are product template (PT) domain. Residues 1292–1423 (QRVLETSGDN…CNIKFFDPSP (132 aa)) are N-terminal hotdog fold. The PKS/mFAS DH domain occupies 1292-1596 (QRVLETSGDN…FQGLARKILD (305 aa)). His-1324 serves as the catalytic Proton acceptor; for dehydratase activity. Residues 1451 to 1596 (AHRMKRGMVY…FQGLARKILD (146 aa)) are C-terminal hotdog fold. The active-site Proton donor; for dehydratase activity is the Asp-1509. A Carrier 1 domain is found at 1640–1714 (PSMATRALAI…DFKHLLAQMG (75 aa)). Ser-1674 carries the post-translational modification O-(pantetheine 4'-phosphoryl)serine. Residues 1712 to 1758 (QMGPGESSDGSSSEGDMSSAASSTDLSSPNTSGLPTPANEKSMTHGL) form a disordered region. A compositionally biased stretch (low complexity) spans 1713 to 1739 (MGPGESSDGSSSEGDMSSAASSTDLSS). Residues 1740 to 1758 (PNTSGLPTPANEKSMTHGL) are compositionally biased toward polar residues. The Carrier 2 domain maps to 1759-1836 (QGQNDSMRQI…DIETTLDLKP (78 aa)). An O-(pantetheine 4'-phosphoryl)serine modification is found at Ser-1796. Positions 1863–2135 (TQHPPATSIL…ELARFIANSM (273 aa)) are claisen cyclase domain. Ser-1953 (for Claisen cyclase activity) is an active-site residue.

The enzyme catalyses 6 malonyl-CoA + acetyl-CoA + 6 H(+) = naphtopyrone YWA1 + 6 CO2 + 7 CoA + H2O. Its pathway is pigment biosynthesis. It functions in the pathway polyketide biosynthesis; heptaketide naphthopyrone YWA1 biosynthesis. In terms of biological role, non-reducing polyketide synthase involved in the biosynthesis of a yellow conidial pigment. Probably forms the heptaketide naphthopyrene YWA1 via condensation of acetate units. In Penicillium expansum (Blue mold rot fungus), this protein is Conidial yellow pigment biosynthesis polyketide synthase melA.